Consider the following 475-residue polypeptide: UDP-glycosyltransferase 708A6 (475 aa).

Residues S286, 348-349 (WV), 366-374 (HCGWNSLTE), and 388-391 (FGDQ) each bind UDP-alpha-D-glucose.

This sequence belongs to the UDP-glycosyltransferase family. As to expression, expressed in radicles, hypocotyls and juvenile leaves. Expressed at low levels in roots.

Its function is as follows. Bifunctional glycosyltransferase that can produce both C- and O-glycosidated flavonoids. Converts 2-hydroxynaringenin to isovitexin. Converts eriodictyol to orientin and isoorientin. Converts naringenin and eriodictyol to naringenin 7-O-glucoside and eriodictyol 7-O-glucoside, respectively. This is UDP-glycosyltransferase 708A6 from Zea mays (Maize).